The sequence spans 275 residues: Lectin DB58 (275 aa).

Positions 1–22 are cleaved as a signal peptide; the sequence is MASSTVSVVLSLFLLLLTQAYS. N-linked (GlcNAc...) asparagine glycans are attached at residues N34 and N101.

It belongs to the leguminous lectin family. As to quaternary structure, heterodimer, composed of an alpha and a beta subunit derived from a single precursor. Post-translationally, leu-264 is missing in a major portion of the beta subunit, suggesting an origin by sequential removal of amino acids rather than a processing by endoproteolytic cleavage.

In terms of biological role, metalloglycoprotein, containing Ca, Mg, Mn, and Zn and the carbohydrates galactose, glucosamine, mannose, and fucose. It agglutinates erythrocytes of blood group A1. In Vigna unguiculata subsp. cylindrica (Horse gram), this protein is Lectin DB58.